Consider the following 1318-residue polypeptide: Maestro heat-like repeat family member 5 (1318 aa).

Residues 1 to 38 (MDRQCSERPYSCTPTGRVSSAVSQNSRISPPVSTSMKD) form a disordered region. Polar residues predominate over residues 12–38 (CTPTGRVSSAVSQNSRISPPVSTSMKD). Residues 581–618 (DELHFLLSHLYIWLASEKAHERQRAVHSCMILLKFLNH) form an HEAT 1 repeat. The interval 676–695 (ESQAPKELSQAHSDGAPLWN) is disordered. 8 HEAT repeats span residues 769–811 (GAKL…SHTC), 840–880 (PTSH…LLAA), 996–1033 (RQIP…SPVL), 1037–1074 (LPKQ…HPDK), 1076–1113 (SLLQ…RLGA), 1118–1155 (SQSL…AMAD), 1164–1200 (QVHQ…LLRW), and 1278–1315 (VDTN…VSAR).

This is Maestro heat-like repeat family member 5 (MROH5) from Homo sapiens (Human).